Consider the following 132-residue polypeptide: Small ribosomal subunit protein uS8 (132 aa).

This sequence belongs to the universal ribosomal protein uS8 family. In terms of assembly, part of the 30S ribosomal subunit. Contacts proteins S5 and S12.

In terms of biological role, one of the primary rRNA binding proteins, it binds directly to 16S rRNA central domain where it helps coordinate assembly of the platform of the 30S subunit. This is Small ribosomal subunit protein uS8 from Bartonella bacilliformis (strain ATCC 35685 / KC583 / Herrer 020/F12,63).